An 89-amino-acid chain; its full sequence is Acylphosphatase (89 aa).

Residues 4–89 (CVRCLIAGRV…IPEIQMFEVR (86 aa)) form the Acylphosphatase-like domain. Active-site residues include Arg-19 and Asn-37.

Belongs to the acylphosphatase family.

The enzyme catalyses an acyl phosphate + H2O = a carboxylate + phosphate + H(+). In Nitrosococcus oceani (strain ATCC 19707 / BCRC 17464 / JCM 30415 / NCIMB 11848 / C-107), this protein is Acylphosphatase (acyP).